A 437-amino-acid chain; its full sequence is UDP-N-acetylmuramate--L-alanine ligase (437 aa).

Position 108–114 (108–114 (GAHGKTS)) interacts with ATP.

It belongs to the MurCDEF family.

It localises to the cytoplasm. The enzyme catalyses UDP-N-acetyl-alpha-D-muramate + L-alanine + ATP = UDP-N-acetyl-alpha-D-muramoyl-L-alanine + ADP + phosphate + H(+). It participates in cell wall biogenesis; peptidoglycan biosynthesis. Cell wall formation. The polypeptide is UDP-N-acetylmuramate--L-alanine ligase (Staphylococcus aureus (strain MRSA252)).